Reading from the N-terminus, the 580-residue chain is Double-stranded RNA-binding protein Staufen homolog 1 (580 aa).

Ser2 bears the N-acetylserine mark. A compositionally biased stretch (polar residues) spans 34 to 44 (SIPSTTSSLPS). The segment at 34-59 (SIPSTTSSLPSENAGRPIQNSALPSA) is disordered. The 91-residue stretch at 72–162 (TPTVELNALC…AAKALRTLQS (91 aa)) folds into the DRBM 1 domain. The residue at position 108 (Arg108) is an Asymmetric dimethylarginine. Arg115 carries the post-translational modification Asymmetric dimethylarginine; alternate. Position 115 is an omega-N-methylarginine; alternate (Arg115). A disordered region spans residues 158–189 (RTLQSEPLPERPEGRRPGEQVNGRESEEENLN). The span at 165 to 182 (LPERPEGRRPGEQVNGRE) shows a compositional bias: basic and acidic residues. A Phosphoserine modification is found at Ser183. One can recognise a DRBM 2 domain in the interval 191-258 (SEISQVFEIA…AIAVLEELKK (68 aa)). At Ser285 the chain carries Phosphoserine. The DRBM 3 domain maps to 293-361 (NPISRLAQIQ…AENMLEILGF (69 aa)). The segment at 367–404 (QPTKPALKSEEKTPIKKPGDGRKVTFFEPGSGDENGTS) is disordered. The span at 373–391 (LKSEEKTPIKKPGDGRKVT) shows a compositional bias: basic and acidic residues. At Ser397 the chain carries Phosphoserine.

Binds tubulin. Binds with low affinity single-stranded RNA or DNA homopolymers. Interacts with CASC3 in an RNA-dependent manner. Identified in a mRNP complex, at least composed of DHX9, DDX3X, ELAVL1, HNRNPU, IGF2BP1, ILF3, PABPC1, PCBP2, PTBP2, STAU1, STAU2, SYNCRIP and YBX1. Interacts with the influenza virus nonstructural protein NS1.

It localises to the cytoplasm. The protein resides in the rough endoplasmic reticulum. Functionally, binds double-stranded RNA (regardless of the sequence) and tubulin. May play a role in specific positioning of mRNAs at given sites in the cell by cross-linking cytoskeletal and RNA components, and in stimulating their translation at the site. The protein is Double-stranded RNA-binding protein Staufen homolog 1 (STAU1) of Ailuropoda melanoleuca (Giant panda).